We begin with the raw amino-acid sequence, 294 residues long: Elongation factor Ts (294 aa).

Positions 81–84 are involved in Mg(2+) ion dislocation from EF-Tu; the sequence is TDFV.

It belongs to the EF-Ts family.

It is found in the cytoplasm. Its function is as follows. Associates with the EF-Tu.GDP complex and induces the exchange of GDP to GTP. It remains bound to the aminoacyl-tRNA.EF-Tu.GTP complex up to the GTP hydrolysis stage on the ribosome. This is Elongation factor Ts from Lawsonia intracellularis (strain PHE/MN1-00).